The following is a 381-amino-acid chain: Anhydro-N-acetylmuramic acid kinase (381 aa).

22-29 contributes to the ATP binding site; that stretch reads GTSIDGID.

The protein belongs to the anhydro-N-acetylmuramic acid kinase family.

The catalysed reaction is 1,6-anhydro-N-acetyl-beta-muramate + ATP + H2O = N-acetyl-D-muramate 6-phosphate + ADP + H(+). The protein operates within amino-sugar metabolism; 1,6-anhydro-N-acetylmuramate degradation. It participates in cell wall biogenesis; peptidoglycan recycling. Functionally, catalyzes the specific phosphorylation of 1,6-anhydro-N-acetylmuramic acid (anhMurNAc) with the simultaneous cleavage of the 1,6-anhydro ring, generating MurNAc-6-P. Is required for the utilization of anhMurNAc either imported from the medium or derived from its own cell wall murein, and thus plays a role in cell wall recycling. The chain is Anhydro-N-acetylmuramic acid kinase from Xylella fastidiosa (strain Temecula1 / ATCC 700964).